Here is a 275-residue protein sequence, read N- to C-terminus: Shikimate dehydrogenase (NADP(+)) (275 aa).

Shikimate contacts are provided by residues 16–18 (SKS) and threonine 63. Lysine 67 serves as the catalytic Proton acceptor. Shikimate-binding residues include asparagine 88 and aspartate 104. NADP(+) is bound by residues 129–133 (GAGGA), 153–158 (NRTVAR), and methionine 219. Tyrosine 221 is a binding site for shikimate. Glycine 243 contacts NADP(+).

Belongs to the shikimate dehydrogenase family. In terms of assembly, homodimer.

It catalyses the reaction shikimate + NADP(+) = 3-dehydroshikimate + NADPH + H(+). It participates in metabolic intermediate biosynthesis; chorismate biosynthesis; chorismate from D-erythrose 4-phosphate and phosphoenolpyruvate: step 4/7. Functionally, involved in the biosynthesis of the chorismate, which leads to the biosynthesis of aromatic amino acids. Catalyzes the reversible NADPH linked reduction of 3-dehydroshikimate (DHSA) to yield shikimate (SA). The protein is Shikimate dehydrogenase (NADP(+)) of Marinobacter nauticus (strain ATCC 700491 / DSM 11845 / VT8) (Marinobacter aquaeolei).